Here is a 370-residue protein sequence, read N- to C-terminus: Germination protease (370 aa).

Residues 1-15 (MEKELDLSQYSVRTD) constitute a propeptide that is removed on maturation.

It belongs to the peptidase A25 family. In terms of assembly, homotetramer. In terms of processing, autoproteolytically processed. The inactive tetrameric zymogen termed p46 autoprocesses to a smaller form termed p41, which is active only during spore germination.

The catalysed reaction is Endopeptidase action with P4 Glu or Asp, P1 preferably Glu &gt; Asp, P1' hydrophobic and P2' Ala.. Its function is as follows. Initiates the rapid degradation of small, acid-soluble proteins during spore germination. The chain is Germination protease (gpr) from Priestia megaterium (strain ATCC 12872 / QMB1551) (Bacillus megaterium).